Here is a 419-residue protein sequence, read N- to C-terminus: Pyrrolysine--tRNA ligase (419 aa).

The disordered stretch occupies residues Ala-100–Arg-157. Positions Asn-120–Thr-141 are enriched in polar residues. The segment covering Pro-142–Ser-154 has biased composition (low complexity).

This sequence belongs to the class-II aminoacyl-tRNA synthetase family.

The protein resides in the cytoplasm. It carries out the reaction tRNA(Pyl) + L-pyrrolysine + ATP = L-pyrrolysyl-tRNA(Pyl) + AMP + diphosphate. Functionally, catalyzes the attachment of pyrrolysine to tRNA(Pyl). Pyrrolysine is a lysine derivative encoded by the termination codon UAG. This is Pyrrolysine--tRNA ligase (pylS) from Methanosarcina barkeri.